A 229-amino-acid chain; its full sequence is Cell division protein FtsQ (229 aa).

The chain crosses the membrane as a helical span at residues 1–21; the sequence is MIVLLCVIFAFLVYSNWHSWL. At 22 to 229 the chain is on the periplasmic side; sequence ESLDRNPIRA…AAVGFSPLPK (208 aa). A POTRA domain is found at 27–97; sequence NPIRAYALTH…DRLSITLIEH (71 aa).

This sequence belongs to the FtsQ/DivIB family. FtsQ subfamily. In terms of assembly, part of a complex composed of FtsB, FtsL and FtsQ.

It localises to the cell inner membrane. Functionally, essential cell division protein. May link together the upstream cell division proteins, which are predominantly cytoplasmic, with the downstream cell division proteins, which are predominantly periplasmic. May control correct divisome assembly. In Actinobacillus pleuropneumoniae serotype 3 (strain JL03), this protein is Cell division protein FtsQ.